The sequence spans 235 residues: ATP synthase subunit a (235 aa).

5 consecutive transmembrane segments (helical) span residues 17–37 (TTNIVSGLIIYAIVFFTLYGM), 76–96 (SFFAFVLFVFIFFANQFGLIF), 113–133 (PVVTLTLSLMVMVLAFAAGVA), 179–201 (LLMSLIANMAFSHGILTIIPGLF), and 211–230 (VFIGSIQAYVFVTLTTVYIS).

This sequence belongs to the ATPase A chain family. In terms of assembly, F-type ATPases have 2 components, CF(1) - the catalytic core - and CF(0) - the membrane proton channel. CF(1) has five subunits: alpha(3), beta(3), gamma(1), delta(1), epsilon(1). CF(0) has three main subunits: a(1), b(2) and c(9-12). The alpha and beta chains form an alternating ring which encloses part of the gamma chain. CF(1) is attached to CF(0) by a central stalk formed by the gamma and epsilon chains, while a peripheral stalk is formed by the delta and b chains.

It localises to the cell membrane. Its function is as follows. Key component of the proton channel; it plays a direct role in the translocation of protons across the membrane. The sequence is that of ATP synthase subunit a from Limosilactobacillus reuteri subsp. reuteri (strain JCM 1112) (Lactobacillus reuteri).